A 278-amino-acid chain; its full sequence is 4-deoxy-L-threo-5-hexosulose-uronate ketol-isomerase (278 aa).

Residues H196, H198, E203, and H245 each contribute to the Zn(2+) site.

This sequence belongs to the KduI family. Requires Zn(2+) as cofactor.

It carries out the reaction 5-dehydro-4-deoxy-D-glucuronate = 3-deoxy-D-glycero-2,5-hexodiulosonate. It participates in glycan metabolism; pectin degradation; 2-dehydro-3-deoxy-D-gluconate from pectin: step 4/5. Its function is as follows. Catalyzes the isomerization of 5-dehydro-4-deoxy-D-glucuronate to 3-deoxy-D-glycero-2,5-hexodiulosonate. This is 4-deoxy-L-threo-5-hexosulose-uronate ketol-isomerase from Salmonella typhimurium (strain LT2 / SGSC1412 / ATCC 700720).